The primary structure comprises 480 residues: Proline--tRNA ligase (480 aa).

It belongs to the class-II aminoacyl-tRNA synthetase family. ProS type 3 subfamily. In terms of assembly, homodimer.

It localises to the cytoplasm. The catalysed reaction is tRNA(Pro) + L-proline + ATP = L-prolyl-tRNA(Pro) + AMP + diphosphate. Functionally, catalyzes the attachment of proline to tRNA(Pro) in a two-step reaction: proline is first activated by ATP to form Pro-AMP and then transferred to the acceptor end of tRNA(Pro). The protein is Proline--tRNA ligase of Mycobacterium leprae (strain Br4923).